A 116-amino-acid polypeptide reads, in one-letter code: Regulator of ribonuclease activity B (116 aa).

Belongs to the RraB family. Interacts with the C-terminal region of Rne.

It is found in the cytoplasm. Its function is as follows. Globally modulates RNA abundance by binding to RNase E (Rne) and regulating its endonucleolytic activity. Can modulate Rne action in a substrate-dependent manner by altering the composition of the degradosome. This chain is Regulator of ribonuclease activity B, found in Colwellia psychrerythraea (strain 34H / ATCC BAA-681) (Vibrio psychroerythus).